Here is a 926-residue protein sequence, read N- to C-terminus: Periplasmic nitrate reductase (926 aa).

The tat-type signal signal peptide spans 1 to 30; the sequence is MNRRDFIKSAAASAACASAGIAIPANLSAA. The 57-residue stretch at 37 to 93 folds into the 4Fe-4S Mo/W bis-MGD-type domain; it reads WRWDKAACRFCGTGCGIMVATKEGKIVAVKGDPEAPVNRGLNCIKGYFNAKIMYGED. Residues Cys-44, Cys-47, Cys-51, and Cys-79 each contribute to the [4Fe-4S] cluster site. Residues Lys-81, Gln-149, Asn-174, Cys-178, 211–218, Met-419, Gln-423, Asn-529, 554–555, Lys-577, Asp-604, and 816–825 each bind Mo-bis(molybdopterin guanine dinucleotide); these read WGANMAEM, SD, and TGRVLEHWHS. Trp-892 contacts substrate. Asn-900 and Lys-917 together coordinate Mo-bis(molybdopterin guanine dinucleotide).

This sequence belongs to the prokaryotic molybdopterin-containing oxidoreductase family. NasA/NapA/NarB subfamily. In terms of assembly, component of the periplasmic nitrate reductase NapAB complex composed of NapA and NapB. Requires [4Fe-4S] cluster as cofactor. Mo-bis(molybdopterin guanine dinucleotide) serves as cofactor. Post-translationally, predicted to be exported by the Tat system. The position of the signal peptide cleavage has not been experimentally proven.

Its subcellular location is the periplasm. The enzyme catalyses 2 Fe(II)-[cytochrome] + nitrate + 2 H(+) = 2 Fe(III)-[cytochrome] + nitrite + H2O. Functionally, catalytic subunit of the periplasmic nitrate reductase complex NapAB. Receives electrons from NapB and catalyzes the reduction of nitrate to nitrite. The polypeptide is Periplasmic nitrate reductase (Campylobacter curvus (strain 525.92)).